Reading from the N-terminus, the 377-residue chain is Protein ECM9 (377 aa).

In terms of biological role, may be involved in cell wall organization and biogenesis. In Saccharomyces cerevisiae (strain ATCC 204508 / S288c) (Baker's yeast), this protein is Protein ECM9 (ECM9).